Reading from the N-terminus, the 173-residue chain is MFIDKIKAKANNDEINVIIEIPMNIGPIKYEFDKESGAVFVDRFMQTTMSYPCNYGFIPHTLSNDGDPVDVLVVAHHPVVPGSVIKCRAVGVLMMEDESGLDEKIIAVPTSKLDITFDHIKELDDLCEMLKKRIVHFFEHYKDLEKGKWVKVTGWENKAKANALINEGIDRAS.

Positions 29, 43, and 55 each coordinate substrate. Residues Asp65, Asp70, and Asp102 each coordinate Mg(2+). Position 141 (Tyr141) interacts with substrate.

It belongs to the PPase family. Homohexamer. Requires Mg(2+) as cofactor.

Its subcellular location is the cytoplasm. It catalyses the reaction diphosphate + H2O = 2 phosphate + H(+). Functionally, catalyzes the hydrolysis of inorganic pyrophosphate (PPi) forming two phosphate ions. The sequence is that of Inorganic pyrophosphatase from Rickettsia felis (strain ATCC VR-1525 / URRWXCal2) (Rickettsia azadi).